The sequence spans 493 residues: Activin receptor type-1C (493 aa).

An N-terminal signal peptide occupies residues M1 to G25. Residues L26–E113 lie on the Extracellular side of the membrane. The chain crosses the membrane as a helical span at residues L114–W134. Over A135–A493 the chain is Cytoplasmic. Residues K165–T194 form the GS domain. The region spanning I195–L485 is the Protein kinase domain. ATP is bound by residues V201 to V209 and K222. The Proton acceptor role is filled by D323.

The protein belongs to the protein kinase superfamily. TKL Ser/Thr protein kinase family. TGFB receptor subfamily. In terms of assembly, binds the type 2 receptor protein ACVR2A. Mg(2+) is required as a cofactor. Mn(2+) serves as cofactor. Expressed in brain, kidney, lung, liver, testis, ovary, adrenal gland, heart, prostate, gastrointestinal tract, and spleen. Distributed throughout both adult and embryonic central nervous system and pancreatic islet cells.

It localises to the membrane. It carries out the reaction L-threonyl-[receptor-protein] + ATP = O-phospho-L-threonyl-[receptor-protein] + ADP + H(+). It catalyses the reaction L-seryl-[receptor-protein] + ATP = O-phospho-L-seryl-[receptor-protein] + ADP + H(+). In terms of biological role, serine/threonine protein kinase which forms a receptor complex on ligand binding. The receptor complex consists of 2 type II and 2 type I transmembrane serine/threonine kinases. Type II receptors phosphorylate and activate type I receptors which autophosphorylate, then bind and activate SMAD transcriptional regulators, SMAD2 and SMAD3. Receptor for activin AB, activin B, activin E and NODAL. Upon NODAL binding, activation results in increased apoptosis and reduced proliferation through suppression of AKT signaling and the activation of Smad2-dependent signaling pathway in pancreatic beta-cells, trophoblasts, epithelial or neuronal cells. Acts as a positive regulator for macrophage activation partially through down-regulation of PPARG expression. This chain is Activin receptor type-1C, found in Rattus norvegicus (Rat).